A 273-amino-acid chain; its full sequence is MEPKRSRLVVCAPEPSHAREFPDVAVFSGGRANASQAERLARAVGRVLADRGVTGGARVRLTMANCADGPTLVQINLQVGDTPLRAQAATAGIDDLRPALIRLDRQIVRASAQWCPRPWPDRPRRRLTTPAEALVTRRKPVVLRRATPLQAIAAMDAMDYDVHLFTDAETGEDAVVYRAGPSGLRLARQHHVFPPGWSRCRAPAGPPVPLIVNSRPTPVLTEAAAVDRAREHGLPFLFFTDQATGRGQLLYSRYDGNLGLITPTGDGVADGLA.

Interacts with human TLR2.

Functionally, involved in translation regulation. Can also stimulate macrophages and peripheral blood mononuclear cells (PBMC) to secrete important cytokines that may be significant in granuloma formation and its maintenance. Increases secretion of IFN-gamma, TNF-alpha, IL-1 beta and IL-8 through human Toll-like receptor 2 (TLR2) signaling pathway. The protein is Dormancy associated translation inhibitor of Mycobacterium tuberculosis (strain CDC 1551 / Oshkosh).